Consider the following 180-residue polypeptide: ATP-dependent protease subunit HslV (180 aa).

T8 is an active-site residue. A165, C168, and T171 together coordinate Na(+).

Belongs to the peptidase T1B family. HslV subfamily. A double ring-shaped homohexamer of HslV is capped on each side by a ring-shaped HslU homohexamer. The assembly of the HslU/HslV complex is dependent on binding of ATP.

The protein resides in the cytoplasm. It carries out the reaction ATP-dependent cleavage of peptide bonds with broad specificity.. With respect to regulation, allosterically activated by HslU binding. In terms of biological role, protease subunit of a proteasome-like degradation complex believed to be a general protein degrading machinery. This chain is ATP-dependent protease subunit HslV, found in Staphylococcus epidermidis (strain ATCC 12228 / FDA PCI 1200).